Reading from the N-terminus, the 132-residue chain is Small ribosomal subunit protein uS8 (132 aa).

The protein belongs to the universal ribosomal protein uS8 family. In terms of assembly, part of the 30S ribosomal subunit. Contacts proteins S5 and S12.

Its function is as follows. One of the primary rRNA binding proteins, it binds directly to 16S rRNA central domain where it helps coordinate assembly of the platform of the 30S subunit. The polypeptide is Small ribosomal subunit protein uS8 (Rickettsia canadensis (strain McKiel)).